A 305-amino-acid polypeptide reads, in one-letter code: Foldase protein PrsA (305 aa).

Residues 1 to 19 form the signal peptide; the sequence is MKKWFIALAGLLLTVTLAG. The N-palmitoyl cysteine moiety is linked to residue C20. C20 carries S-diacylglycerol cysteine lipidation. The 100-residue stretch at 136–235 folds into the PpiC domain; sequence EPEVSVAHIL…YGYHVILMLK (100 aa).

This sequence belongs to the PrsA family.

The protein localises to the cell membrane. It catalyses the reaction [protein]-peptidylproline (omega=180) = [protein]-peptidylproline (omega=0). Plays a major role in protein secretion by helping the post-translocational extracellular folding of several secreted proteins. The sequence is that of Foldase protein PrsA from Levilactobacillus brevis (strain ATCC 367 / BCRC 12310 / CIP 105137 / JCM 1170 / LMG 11437 / NCIMB 947 / NCTC 947) (Lactobacillus brevis).